The chain runs to 338 residues: Lipoate-protein ligase A (338 aa).

The BPL/LPL catalytic domain occupies 29–216 (PATQRVLFLW…AFFAHYGERV (188 aa)). Residues arginine 71, 76–79 (GAVF), and lysine 134 each bind ATP. Lysine 134 serves as a coordination point for (R)-lipoate.

This sequence belongs to the LplA family. As to quaternary structure, monomer.

The protein localises to the cytoplasm. It catalyses the reaction L-lysyl-[lipoyl-carrier protein] + (R)-lipoate + ATP = N(6)-[(R)-lipoyl]-L-lysyl-[lipoyl-carrier protein] + AMP + diphosphate + H(+). It functions in the pathway protein modification; protein lipoylation via exogenous pathway; protein N(6)-(lipoyl)lysine from lipoate: step 1/2. It participates in protein modification; protein lipoylation via exogenous pathway; protein N(6)-(lipoyl)lysine from lipoate: step 2/2. Its function is as follows. Catalyzes both the ATP-dependent activation of exogenously supplied lipoate to lipoyl-AMP and the transfer of the activated lipoyl onto the lipoyl domains of lipoate-dependent enzymes. The polypeptide is Lipoate-protein ligase A (Salmonella arizonae (strain ATCC BAA-731 / CDC346-86 / RSK2980)).